We begin with the raw amino-acid sequence, 462 residues long: Sodium-coupled neutral amino acid transporter 7 (462 aa).

Serine 28 carries the phosphoserine modification. The next 11 membrane-spanning stretches (helical) occupy residues 56-76, 82-102, 130-150, 178-198, 205-225, 239-259, 282-302, 319-339, 371-391, 395-415, and 428-448; these read AIFI…PAAF, VAAG…GLVI, LCEV…LIII, FTIS…REIG, FLSV…YIWP, ASWM…QCHV, AAMV…FLTF, MAVA…YPIL, VLQT…IPDI, ISVI…LCLI, and ASWW…AFIF.

This sequence belongs to the amino acid/polyamine transporter 2 family. Interacts with the mTORC1 complex; this interaction mediates the recruitment of mTORC1 to the lysosome and its subsequent activation.

It is found in the lysosome membrane. The protein resides in the cell projection. Its subcellular location is the axon. It catalyses the reaction L-asparagine(in) + Na(+)(in) = L-asparagine(out) + Na(+)(out). The enzyme catalyses L-glutamine(in) + Na(+)(in) = L-glutamine(out) + Na(+)(out). Its function is as follows. Symporter that selectively cotransports sodium ions and amino acids, such as L-glutamine and L-asparagine from the lysosome into the cytoplasm and may participates in mTORC1 activation. The transport activity requires an acidic lysosomal lumen. This chain is Sodium-coupled neutral amino acid transporter 7, found in Homo sapiens (Human).